Here is a 129-residue protein sequence, read N- to C-terminus: Follitropin subunit beta (129 aa).

A signal peptide spans 1 to 18 (MKSVQFCFLFCCWRATCC). 6 disulfide bridges follow: cysteine 21/cysteine 69, cysteine 35/cysteine 84, cysteine 38/cysteine 122, cysteine 46/cysteine 100, cysteine 50/cysteine 102, and cysteine 105/cysteine 112. Asparagine 25 and asparagine 42 each carry an N-linked (GlcNAc...) asparagine glycan.

This sequence belongs to the glycoprotein hormones subunit beta family. In terms of assembly, heterodimer. The active follitropin is a heterodimer composed of an alpha chain/CGA shared with other hormones and a unique beta chain/FSHB shown here.

The protein resides in the secreted. Functionally, together with the alpha chain CGA constitutes follitropin, the follicle-stimulating hormone, and provides its biological specificity to the hormone heterodimer. Binds FSHR, a G protein-coupled receptor, on target cells to activate downstream signaling pathways. Follitropin is involved in follicle development and spermatogenesis in reproductive organs. The chain is Follitropin subunit beta (FSHB) from Cervus nippon (Sika deer).